We begin with the raw amino-acid sequence, 438 residues long: Probable chaperone protein ClpB 1 (438 aa).

The stretch at Met-1 to Ala-94 forms a coiled coil. Residues Met-1–Gly-118 are linker. The segment at Glu-128–Pro-345 is NBD2. Gly-178–Thr-185 is an ATP binding site. Positions Leu-346–Lys-438 are C-terminal.

Belongs to the ClpA/ClpB family. Homohexamer. The oligomerization is ATP-dependent.

It localises to the cytoplasm. Part of a stress-induced multi-chaperone system, it is involved in the recovery of the cell from heat-induced damage, in cooperation with DnaK, DnaJ and GrpE. Acts before DnaK, in the processing of protein aggregates. Protein binding stimulates the ATPase activity; ATP hydrolysis unfolds the denatured protein aggregates, which probably helps expose new hydrophobic binding sites on the surface of ClpB-bound aggregates, contributing to the solubilization and refolding of denatured protein aggregates by DnaK. The chain is Probable chaperone protein ClpB 1 (clpB1) from Chlorobaculum tepidum (strain ATCC 49652 / DSM 12025 / NBRC 103806 / TLS) (Chlorobium tepidum).